The sequence spans 643 residues: Uromodulin (643 aa).

The first 26 residues, 1-26 (MKCLFSPNFMWMAAVVTSWVIIPAAT), serve as a signal peptide directing secretion. The EGF-like 1 domain occupies 32–66 (KSCSECHSNATCTVDGAATTCACQEGFTGDGLECV). 21 disulfide bridges follow: cysteine 34-cysteine 43, cysteine 37-cysteine 52, cysteine 54-cysteine 65, cysteine 71-cysteine 85, cysteine 79-cysteine 94, cysteine 96-cysteine 108, cysteine 114-cysteine 128, cysteine 122-cysteine 137, cysteine 139-cysteine 150, cysteine 152-cysteine 163, cysteine 157-cysteine 172, cysteine 176-cysteine 269, cysteine 197-cysteine 284, cysteine 219-cysteine 257, cysteine 225-cysteine 289, cysteine 250-cysteine 258, cysteine 299-cysteine 308, cysteine 302-cysteine 317, cysteine 319-cysteine 349, cysteine 337-cysteine 427, and cysteine 368-cysteine 391. A glycan (N-linked (GlcNAc...) asparagine) is linked at asparagine 40. Positions 67–109 (DLDECAVLGAHNCSATKSCVNTLGSYTCVCPEGFLLSSELGCE) constitute an EGF-like 2; calcium-binding domain. N-linked (GlcNAc...) asparagine glycosylation is present at asparagine 78. Residues 110–151 (DVDECAEPGLSRCHALATCINGEGNYSCVCPAGYLGDGRHCE) form the EGF-like 3; calcium-binding domain. N-linked (GlcNAc...) asparagine glycosylation is present at asparagine 134. The beta hairpin stretch occupies residues 152 to 173 (CSPGSCGPGLDCVREGDALVCV). The tract at residues 174–293 (DPCQVHRILD…CHLAYCTDPS (120 aa)) is D10C. N-linked (GlcNAc...) asparagine glycosylation is present at asparagine 234. An N-linked (GlcNAc...) asparagine glycan is attached at asparagine 277. Residues 294–325 (SVEGTCEECRVDEDCKSDNGEWHCQCKQDFNV) enclose the EGF-like 4 domain. Asparagine 324 is a glycosylation site (N-linked (GlcNAc...) asparagine). The tract at residues 336 to 431 (ECGVDDIKLS…RINFACSYPL (96 aa)) is ZP-N. The region spanning 336–587 (ECGVDDIKLS…EKCRPTCPET (252 aa)) is the ZP domain. Residues asparagine 398 and asparagine 449 are each glycosylated (N-linked (GlcNAc...) asparagine). The flexible ZP-N/ZP-C linker; important for secretion and polymerization into filaments stretch occupies residues 432–455 (DMKVSLKTSLQPMVSALNISMGGT). An internal hydrophobic patch (IHP) region spans residues 456–466 (GTFTVRMALFQ). The segment at 456 to 587 (GTFTVRMALF…EKCRPTCPET (132 aa)) is ZP-C. 3 cysteine pairs are disulfide-bonded: cysteine 508–cysteine 568, cysteine 529–cysteine 584, and cysteine 573–cysteine 580. N-linked (GlcNAc...) asparagine glycosylation occurs at asparagine 515. Positions 588–591 (RFRS) are essential for cleavage by HPN. The interval 600–608 (VLNLGPITR) is external hydrophobic patch (EHP); regulates polymerization into filaments. Serine 621 is lipidated: GPI-anchor amidated serine. Positions 622–643 (SLGLLQVWLPLLLSATLTLMSP) are cleaved as a propeptide — removed in mature form.

In terms of assembly, homodimer that then polymerizes into long filaments. The filaments can additionally assemble laterally to form a sheet. The filaments consist of a zigzag-shaped backbone with laterally protruding arms which interact with bacterial adhesin fimH. Two fimH molecules can bind to a single UMOD monomer. In terms of processing, N-glycosylated. Post-translationally, proteolytically cleaved at a conserved C-terminal proteolytic cleavage site to generate the secreted form found in urine. This cleavage is catalyzed by HPN.

It is found in the apical cell membrane. The protein resides in the basolateral cell membrane. It localises to the cell projection. The protein localises to the cilium membrane. Its subcellular location is the secreted. Functions in biogenesis and organization of the apical membrane of epithelial cells of the thick ascending limb of Henle's loop (TALH), where it promotes formation of complex filamentous gel-like structure that may play a role in the water barrier permeability. May serve as a receptor for binding and endocytosis of cytokines (IL-1, IL-2) and TNF. Facilitates neutrophil migration across renal epithelia. Functionally, in the urine, may contribute to colloid osmotic pressure, retards passage of positively charged electrolytes, and inhibits formation of liquid containing supersaturated salts and subsequent formation of salt crystals. Protects against urinary tract infections by binding to type 1 fimbriated E.coli. Binds to bacterial adhesin fimH which mediates the stable formation of bacterial aggregates, prevents the binding of E.coli to uroplakins UPK1A and UPK1B which act as urothelial receptors for type I fimbriae, and allows for pathogen clearance through micturation. Also promotes aggregation of other bacteria including K.pneumoniae, P.aeruginosa and S.mitis and so may also protect against other uropathogens. This chain is Uromodulin (UMOD), found in Bos taurus (Bovine).